The chain runs to 112 residues: NADH-quinone oxidoreductase subunit K (112 aa).

3 helical membrane-spanning segments follow: residues Leu-14–Ile-34, Val-39–Phe-59, and Leu-76–Phe-96.

Belongs to the complex I subunit 4L family. As to quaternary structure, NDH-1 is composed of 14 different subunits. Subunits NuoA, H, J, K, L, M, N constitute the membrane sector of the complex.

It localises to the cell membrane. It catalyses the reaction a quinone + NADH + 5 H(+)(in) = a quinol + NAD(+) + 4 H(+)(out). In terms of biological role, NDH-1 shuttles electrons from NADH, via FMN and iron-sulfur (Fe-S) centers, to quinones in the respiratory chain. The immediate electron acceptor for the enzyme in this species is believed to be a menaquinone. Couples the redox reaction to proton translocation (for every two electrons transferred, four hydrogen ions are translocated across the cytoplasmic membrane), and thus conserves the redox energy in a proton gradient. This chain is NADH-quinone oxidoreductase subunit K, found in Rubrobacter xylanophilus (strain DSM 9941 / JCM 11954 / NBRC 16129 / PRD-1).